The primary structure comprises 63 residues: Protein sigN172 (63 aa).

The polypeptide is Protein sigN172 (Dictyostelium discoideum (Social amoeba)).